Here is a 221-residue protein sequence, read N- to C-terminus: Urease accessory protein UreF (221 aa).

The protein belongs to the UreF family. As to quaternary structure, ureD, UreF and UreG form a complex that acts as a GTP-hydrolysis-dependent molecular chaperone, activating the urease apoprotein by helping to assemble the nickel containing metallocenter of UreC. The UreE protein probably delivers the nickel.

It localises to the cytoplasm. Its function is as follows. Required for maturation of urease via the functional incorporation of the urease nickel metallocenter. The chain is Urease accessory protein UreF from Microcystis aeruginosa (strain NIES-843 / IAM M-2473).